The following is a 360-amino-acid chain: Photosystem II protein D1 (360 aa).

The next 3 helical transmembrane spans lie at Tyr29–Ser46, His118–Leu133, and Trp142–Ala156. His118 contacts chlorophyll a. A pheophytin a-binding site is contributed by Tyr126. 2 residues coordinate [CaMn4O5] cluster: Asp170 and Glu189. The helical transmembrane segment at Phe197 to Leu218 threads the bilayer. His198 contributes to the chlorophyll a binding site. A quinone-binding positions include His215 and Ser264–Phe265. His215 lines the Fe cation pocket. His272 provides a ligand contact to Fe cation. The helical transmembrane segment at Phe274–Met288 threads the bilayer. [CaMn4O5] cluster-binding residues include His332, Glu333, Asp342, and Ala344. Residues Ser345 to Gly360 constitute a propeptide that is removed on maturation.

The protein belongs to the reaction center PufL/M/PsbA/D family. In terms of assembly, PSII is composed of 1 copy each of membrane proteins PsbA, PsbB, PsbC, PsbD, PsbE, PsbF, PsbH, PsbI, PsbJ, PsbK, PsbL, PsbM, PsbT, PsbX, PsbY, PsbZ, Psb30/Ycf12, at least 3 peripheral proteins of the oxygen-evolving complex and a large number of cofactors. It forms dimeric complexes. The cofactor is The D1/D2 heterodimer binds P680, chlorophylls that are the primary electron donor of PSII, and subsequent electron acceptors. It shares a non-heme iron and each subunit binds pheophytin, quinone, additional chlorophylls, carotenoids and lipids. D1 provides most of the ligands for the Mn4-Ca-O5 cluster of the oxygen-evolving complex (OEC). There is also a Cl(-1) ion associated with D1 and D2, which is required for oxygen evolution. The PSII complex binds additional chlorophylls, carotenoids and specific lipids.. In terms of processing, tyr-161 forms a radical intermediate that is referred to as redox-active TyrZ, YZ or Y-Z. Post-translationally, C-terminally processed by CTPA; processing is essential to allow assembly of the oxygen-evolving complex and thus photosynthetic growth.

The protein resides in the plastid. It localises to the chloroplast thylakoid membrane. The catalysed reaction is 2 a plastoquinone + 4 hnu + 2 H2O = 2 a plastoquinol + O2. Functionally, photosystem II (PSII) is a light-driven water:plastoquinone oxidoreductase that uses light energy to abstract electrons from H(2)O, generating O(2) and a proton gradient subsequently used for ATP formation. It consists of a core antenna complex that captures photons, and an electron transfer chain that converts photonic excitation into a charge separation. The D1/D2 (PsbA/PsbD) reaction center heterodimer binds P680, the primary electron donor of PSII as well as several subsequent electron acceptors. In Palmaria palmata (Dulse), this protein is Photosystem II protein D1.